The primary structure comprises 384 residues: Mannitol-1-phosphate 5-dehydrogenase (384 aa).

4–15 is a binding site for NAD(+); sequence AVHFGAGNIGRG.

The protein belongs to the mannitol dehydrogenase family.

The enzyme catalyses D-mannitol 1-phosphate + NAD(+) = beta-D-fructose 6-phosphate + NADH + H(+). This chain is Mannitol-1-phosphate 5-dehydrogenase, found in Lacticaseibacillus paracasei (strain ATCC 334 / BCRC 17002 / CCUG 31169 / CIP 107868 / KCTC 3260 / NRRL B-441) (Lactobacillus paracasei).